We begin with the raw amino-acid sequence, 110 residues long: MLEKTTRMNYLFDFYQSLLTQKQRSYMSLYYLDDLSLGEIAEEFDVSRQAVYDNIKRTEAMLEEYEDKLVLLQKFQERQRLVAKLKQLISEEEHVNEEMKQVVEAIEKLD.

The protein belongs to the UPF0122 family.

Might take part in the signal recognition particle (SRP) pathway. This is inferred from the conservation of its genetic proximity to ftsY/ffh. May be a regulatory protein. The protein is UPF0122 protein BCA_3946 of Bacillus cereus (strain 03BB102).